The chain runs to 215 residues: Rho-related GTP-binding protein RhoF (215 aa).

The residue at position 1 (Met1) is an N-acetylmethionine. Residue 30–37 (GDGGCGKT) participates in GTP binding. The Effector region signature appears at 52–60 (YAPSVFEKY). Residues 77–81 (DTAGQ) and 135–138 (CKTD) contribute to the GTP site. Cys212 is modified (cysteine methyl ester). The S-geranylgeranyl cysteine moiety is linked to residue Cys212. A propeptide spans 213-215 (LLL) (removed in mature form).

It belongs to the small GTPase superfamily. Rho family.

Its subcellular location is the cell membrane. The protein resides in the cytoplasm. The protein localises to the cytoskeleton. Its function is as follows. Plasma membrane-associated small GTPase which cycles between an active GTP-bound and an inactive GDP-bound state. Causes the formation of thin, actin-rich surface projections called filopodia. Functions cooperatively with CDC42 and Rac to generate additional structures, increasing the diversity of actin-based morphology. The sequence is that of Rho-related GTP-binding protein RhoF (RHOF) from Bos taurus (Bovine).